The chain runs to 341 residues: Fructose-1,6-bisphosphatase, cytosolic (341 aa).

Residues glutamate 71, glutamate 100, aspartate 121, leucine 123, and aspartate 124 each contribute to the Mg(2+) site. Substrate contacts are provided by residues 124-127 (DGSS), asparagine 215, tyrosine 247, tyrosine 267, and lysine 277. Glutamate 283 lines the Mg(2+) pocket.

The protein belongs to the FBPase class 1 family. Requires Mg(2+) as cofactor.

It is found in the cytoplasm. It localises to the nucleus. It carries out the reaction beta-D-fructose 1,6-bisphosphate + H2O = beta-D-fructose 6-phosphate + phosphate. In terms of biological role, catalyzes the first irreversible reaction from fructose-1,6-bisphosphate to fructose-6-phosphate and inorganic phosphate and plays an important regulatory role in sucrose biosynthesis and metabolism. Its activity is essential to regulate starch levels. Functions in fructose-mediated signaling independently of its catalytic activity in sugar metabolism. May act downstream of ABA2/GIN1, which is involved in abscisic acid (ABA) synthesis to regulate autotrophic transition and modulate early seedling establishment after seed germination. This chain is Fructose-1,6-bisphosphatase, cytosolic, found in Arabidopsis thaliana (Mouse-ear cress).